Consider the following 175-residue polypeptide: Cytidylate kinase (175 aa).

Position 7–15 (7–15 (GLPGSGTTT)) interacts with ATP.

This sequence belongs to the cytidylate kinase family. Type 2 subfamily.

Its subcellular location is the cytoplasm. The enzyme catalyses CMP + ATP = CDP + ADP. The catalysed reaction is dCMP + ATP = dCDP + ADP. The sequence is that of Cytidylate kinase from Methanococcoides burtonii (strain DSM 6242 / NBRC 107633 / OCM 468 / ACE-M).